The chain runs to 271 residues: Aminodeoxychorismate lyase (271 aa).

N6-(pyridoxal phosphate)lysine is present on Lys140.

Belongs to the class-IV pyridoxal-phosphate-dependent aminotransferase family. In terms of assembly, homodimer. It depends on pyridoxal 5'-phosphate as a cofactor.

The enzyme catalyses 4-amino-4-deoxychorismate = 4-aminobenzoate + pyruvate + H(+). It participates in cofactor biosynthesis; tetrahydrofolate biosynthesis; 4-aminobenzoate from chorismate: step 2/2. Its function is as follows. Involved in the biosynthesis of p-aminobenzoate (PABA), a precursor of tetrahydrofolate. Converts 4-amino-4-deoxychorismate into 4-aminobenzoate (PABA) and pyruvate. This chain is Aminodeoxychorismate lyase (pabC), found in Vibrio harveyi (Beneckea harveyi).